Here is a 464-residue protein sequence, read N- to C-terminus: Fumarate hydratase class II (464 aa).

Substrate is bound by residues 96–98 (SGT), 127–130 (HPND), 137–139 (SSN), and Thr-185. Catalysis depends on His-186, which acts as the Proton donor/acceptor. The active site involves Ser-316. Residues Ser-317 and 322 to 324 (KVN) contribute to the substrate site.

The protein belongs to the class-II fumarase/aspartase family. Fumarase subfamily. In terms of assembly, homotetramer.

The protein localises to the cytoplasm. The enzyme catalyses (S)-malate = fumarate + H2O. The protein operates within carbohydrate metabolism; tricarboxylic acid cycle; (S)-malate from fumarate: step 1/1. Involved in the TCA cycle. Catalyzes the stereospecific interconversion of fumarate to L-malate. This chain is Fumarate hydratase class II, found in Pseudomonas putida (strain ATCC 47054 / DSM 6125 / CFBP 8728 / NCIMB 11950 / KT2440).